Consider the following 491-residue polypeptide: Cytochrome P450 monooxygenase 521A1 (491 aa).

Residues 1–21 (MILLTLLYLIIFYIIIDFIKK) traverse the membrane as a helical segment. Cys438 lines the heme pocket.

The protein belongs to the cytochrome P450 family. Heme serves as cofactor.

Its subcellular location is the membrane. The catalysed reaction is discoidol + reduced [NADPH--hemoprotein reductase] + O2 = discodiene + acetone + oxidized [NADPH--hemoprotein reductase] + 2 H2O + H(+). The protein operates within sesquiterpene biosynthesis. Its function is as follows. Cytochrome P450 monooxygenase; part of the gene cluster that mediates the biosynthesis of the trisnorsesquiterpene discodiene which has a function during later stages of multicellular development, during the transition from fingers to Mexican hats. The terpene synthase tps8 converts its substrate farnesyl diphosphate (FDP) into the bicyclic sesquiterpene alcohol discoidol. The cytochrome P450 monooxygenase cyp521A1 then catalyzes the oxidative degradation of discoidol to form the trisnorsesquiterpene discodiene. This Dictyostelium discoideum (Social amoeba) protein is Cytochrome P450 monooxygenase 521A1 (cyp521A1).